Reading from the N-terminus, the 121-residue chain is Tachykinin-3 (121 aa).

An N-terminal signal peptide occupies residues 1-16 (MRIMLLFTAILAFSLA). A propeptide spanning residues 17–78 (QSFGAVCKEP…TDPKESTSPE (62 aa)) is cleaved from the precursor. Met-90 is modified (methionine amide). Positions 93 to 121 (RSVQPDSPTDVNQENVPSFGILKYPPRAE) are disordered. The propeptide occupies 94 to 121 (SVQPDSPTDVNQENVPSFGILKYPPRAE). Positions 96–108 (QPDSPTDVNQENV) are enriched in polar residues.

This sequence belongs to the tachykinin family.

Its subcellular location is the secreted. Functionally, tachykinins are active peptides which excite neurons, evoke behavioral responses, are potent vasodilators and secretagogues, and contract (directly or indirectly) many smooth muscles. Is a critical central regulator of gonadal function. This Homo sapiens (Human) protein is Tachykinin-3 (TAC3).